A 527-amino-acid chain; its full sequence is Glutamate--cysteine ligase (527 aa).

Belongs to the glutamate--cysteine ligase type 1 family. Type 1 subfamily.

The enzyme catalyses L-cysteine + L-glutamate + ATP = gamma-L-glutamyl-L-cysteine + ADP + phosphate + H(+). It participates in sulfur metabolism; glutathione biosynthesis; glutathione from L-cysteine and L-glutamate: step 1/2. The sequence is that of Glutamate--cysteine ligase from Pseudomonas aeruginosa (strain LESB58).